A 212-amino-acid chain; its full sequence is ATP-dependent dethiobiotin synthetase BioD (212 aa).

Residue 12–17 (DCGKTF) participates in ATP binding. T16 contributes to the Mg(2+) binding site. Residue K33 is part of the active site. Residue S37 participates in substrate binding. Residues D50, 110–113 (EGAG), and 170–171 (NC) each bind ATP. Residues D50 and E110 each contribute to the Mg(2+) site.

The protein belongs to the dethiobiotin synthetase family. In terms of assembly, homodimer. The cofactor is Mg(2+).

The protein resides in the cytoplasm. The enzyme catalyses (7R,8S)-7,8-diammoniononanoate + CO2 + ATP = (4R,5S)-dethiobiotin + ADP + phosphate + 3 H(+). Its pathway is cofactor biosynthesis; biotin biosynthesis; biotin from 7,8-diaminononanoate: step 1/2. In terms of biological role, catalyzes a mechanistically unusual reaction, the ATP-dependent insertion of CO2 between the N7 and N8 nitrogen atoms of 7,8-diaminopelargonic acid (DAPA, also called 7,8-diammoniononanoate) to form a ureido ring. This is ATP-dependent dethiobiotin synthetase BioD from Legionella pneumophila (strain Paris).